A 176-amino-acid chain; its full sequence is Phosphopantetheine adenylyltransferase (176 aa).

T11 lines the substrate pocket. Residues 11 to 12 (TF) and H19 contribute to the ATP site. 3 residues coordinate substrate: K43, L93, and R107. ATP-binding positions include E117 and 141 to 147 (LSVVSSS).

This sequence belongs to the bacterial CoaD family. As to quaternary structure, homohexamer. Mg(2+) is required as a cofactor.

It localises to the cytoplasm. The enzyme catalyses (R)-4'-phosphopantetheine + ATP + H(+) = 3'-dephospho-CoA + diphosphate. The protein operates within cofactor biosynthesis; coenzyme A biosynthesis; CoA from (R)-pantothenate: step 4/5. Its function is as follows. Reversibly transfers an adenylyl group from ATP to 4'-phosphopantetheine, yielding dephospho-CoA (dPCoA) and pyrophosphate. In Tropheryma whipplei (strain TW08/27) (Whipple's bacillus), this protein is Phosphopantetheine adenylyltransferase.